The chain runs to 383 residues: Lipoyl synthase, mitochondrial (383 aa).

The segment covering 25–34 (STPSLLQTLD) has biased composition (polar residues). The disordered stretch occupies residues 25-44 (STPSLLQTLDPSVPSPPAAG). [4Fe-4S] cluster contacts are provided by Cys110, Cys115, Cys121, Cys141, Cys145, Cys148, and Ser357. Residues 126-346 (ETGTATATIM…RALGVEMGFR (221 aa)) form the Radical SAM core domain.

The protein belongs to the radical SAM superfamily. Lipoyl synthase family. The cofactor is [4Fe-4S] cluster.

Its subcellular location is the mitochondrion. It carries out the reaction [[Fe-S] cluster scaffold protein carrying a second [4Fe-4S](2+) cluster] + N(6)-octanoyl-L-lysyl-[protein] + 2 oxidized [2Fe-2S]-[ferredoxin] + 2 S-adenosyl-L-methionine + 4 H(+) = [[Fe-S] cluster scaffold protein] + N(6)-[(R)-dihydrolipoyl]-L-lysyl-[protein] + 4 Fe(3+) + 2 hydrogen sulfide + 2 5'-deoxyadenosine + 2 L-methionine + 2 reduced [2Fe-2S]-[ferredoxin]. Its pathway is protein modification; protein lipoylation via endogenous pathway; protein N(6)-(lipoyl)lysine from octanoyl-[acyl-carrier-protein]: step 2/2. In terms of biological role, catalyzes the radical-mediated insertion of two sulfur atoms into the C-6 and C-8 positions of the octanoyl moiety bound to the lipoyl domains of lipoate-dependent enzymes, thereby converting the octanoylated domains into lipoylated derivatives. The chain is Lipoyl synthase, mitochondrial from Zea mays (Maize).